We begin with the raw amino-acid sequence, 239 residues long: MRTLFIGDLHLSADRLDITQAFNRFLDTELDDADALYILGDLFEVWVGDDLAAPFALELAHKLKQVSQTLPIFFIHGNRDFMLGKRFAEAAGMQLLPEVTCIELYGVKTVILHGDSLCTLDKAYQRFRKLRSFACARWLYSCLPKKRRQAIANKIRSNSQSSNQQKSYVIMDVEPSAVNALFVKTHTTRMIHGHTHRPAIHIVDNACQRIVVGDWYEQGSVLSVSANGVDLKSLPFETT.

Positions 8, 10, 41, 78, and 113 each coordinate Mn(2+). 78–79 (NR) lines the substrate pocket. Aspartate 121, serine 159, asparagine 163, lysine 166, and histidine 194 together coordinate substrate. The Mn(2+) site is built by histidine 194 and histidine 196.

This sequence belongs to the LpxH family. Mn(2+) is required as a cofactor.

Its subcellular location is the cell inner membrane. It catalyses the reaction UDP-2-N,3-O-bis[(3R)-3-hydroxytetradecanoyl]-alpha-D-glucosamine + H2O = 2-N,3-O-bis[(3R)-3-hydroxytetradecanoyl]-alpha-D-glucosaminyl 1-phosphate + UMP + 2 H(+). Its pathway is glycolipid biosynthesis; lipid IV(A) biosynthesis; lipid IV(A) from (3R)-3-hydroxytetradecanoyl-[acyl-carrier-protein] and UDP-N-acetyl-alpha-D-glucosamine: step 4/6. Hydrolyzes the pyrophosphate bond of UDP-2,3-diacylglucosamine to yield 2,3-diacylglucosamine 1-phosphate (lipid X) and UMP by catalyzing the attack of water at the alpha-P atom. Involved in the biosynthesis of lipid A, a phosphorylated glycolipid that anchors the lipopolysaccharide to the outer membrane of the cell. This is UDP-2,3-diacylglucosamine hydrolase from Shewanella oneidensis (strain ATCC 700550 / JCM 31522 / CIP 106686 / LMG 19005 / NCIMB 14063 / MR-1).